Consider the following 294-residue polypeptide: Probable 2-(5''-triphosphoribosyl)-3'-dephosphocoenzyme-A synthase (294 aa).

It belongs to the CitG/MdcB family.

It carries out the reaction 3'-dephospho-CoA + ATP = 2'-(5''-triphospho-alpha-D-ribosyl)-3'-dephospho-CoA + adenine. This chain is Probable 2-(5''-triphosphoribosyl)-3'-dephosphocoenzyme-A synthase, found in Streptococcus pyogenes serotype M2 (strain MGAS10270).